Reading from the N-terminus, the 214-residue chain is MASLFKKKTVDDIIREQNKELRGTQRAITRDRAALEKQEKQLEMEIKKMAKTGNKDACRVLAKQLVQLRKQKTRTYAVSSKVTSMSTQTKVMSSQMKMAGAMSTTAKTMQAVNKKMDPQKTLQTMQNFQKENMKMEMTDEMINDTLDDIFDASEDEEESQDIVNQVLDEIGIEISGKMAKAPSAAKGLPSTSAAKSKGISDEEIERQLKALGVD.

Positions 25 to 55 form a coiled coil; sequence QRAITRDRAALEKQEKQLEMEIKKMAKTGNK. Residues 178-200 form a disordered region; the sequence is MAKAPSAAKGLPSTSAAKSKGIS. The MIT-interacting motif motif lies at 202-212; it reads EEIERQLKALG.

The protein belongs to the SNF7 family. In terms of assembly, probable core component of the endosomal sorting required for transport complex III (ESCRT-III). ESCRT-III components are thought to multimerize to form a flat lattice on the perimeter membrane of the endosome.

Its subcellular location is the cytoplasm. The protein resides in the cytosol. It is found in the late endosome membrane. Probable core component of the endosomal sorting required for transport complex III (ESCRT-III) which is involved in multivesicular bodies (MVBs) formation and sorting of endosomal cargo proteins into MVBs. MVBs contain intraluminal vesicles (ILVs) that are generated by invagination and scission from the limiting membrane of the endosome and mostly are delivered to lysosomes enabling degradation of membrane proteins, such as stimulated growth factor receptors, lysosomal enzymes and lipids. The protein is Charged multivesicular body protein 2b-B (chmp2b-b) of Xenopus laevis (African clawed frog).